We begin with the raw amino-acid sequence, 72 residues long: Cytochrome c oxidase subunit 8C, mitochondrial (72 aa).

The transit peptide at 1-29 (MSRLLQFCSSLLRHRVVLFSKPGHSGRLS) directs the protein to the mitochondrion. Residues 30 to 40 (HSESPQNQVLT) lie on the Mitochondrial matrix side of the membrane. Residues 41 to 64 (PTESVVGIVVFFATFFIPAAYVMS) form a helical membrane-spanning segment. At 65–72 (NLKFFKGE) the chain is on the mitochondrial intermembrane side.

This sequence belongs to the cytochrome c oxidase VIII family. As to quaternary structure, component of the cytochrome c oxidase (complex IV, CIV), a multisubunit enzyme composed of 14 subunits. The complex is composed of a catalytic core of 3 subunits MT-CO1, MT-CO2 and MT-CO3, encoded in the mitochondrial DNA, and 11 supernumerary subunits COX4I, COX5A, COX5B, COX6A, COX6B, COX6C, COX7A, COX7B, COX7C, COX8 and NDUFA4, which are encoded in the nuclear genome. The complex exists as a monomer or a dimer and forms supercomplexes (SCs) in the inner mitochondrial membrane with NADH-ubiquinone oxidoreductase (complex I, CI) and ubiquinol-cytochrome c oxidoreductase (cytochrome b-c1 complex, complex III, CIII), resulting in different assemblies (supercomplex SCI(1)III(2)IV(1) and megacomplex MCI(2)III(2)IV(2)).

The protein resides in the mitochondrion inner membrane. It participates in energy metabolism; oxidative phosphorylation. Component of the cytochrome c oxidase, the last enzyme in the mitochondrial electron transport chain which drives oxidative phosphorylation. The respiratory chain contains 3 multisubunit complexes succinate dehydrogenase (complex II, CII), ubiquinol-cytochrome c oxidoreductase (cytochrome b-c1 complex, complex III, CIII) and cytochrome c oxidase (complex IV, CIV), that cooperate to transfer electrons derived from NADH and succinate to molecular oxygen, creating an electrochemical gradient over the inner membrane that drives transmembrane transport and the ATP synthase. Cytochrome c oxidase is the component of the respiratory chain that catalyzes the reduction of oxygen to water. Electrons originating from reduced cytochrome c in the intermembrane space (IMS) are transferred via the dinuclear copper A center (CU(A)) of subunit 2 and heme A of subunit 1 to the active site in subunit 1, a binuclear center (BNC) formed by heme A3 and copper B (CU(B)). The BNC reduces molecular oxygen to 2 water molecules using 4 electrons from cytochrome c in the IMS and 4 protons from the mitochondrial matrix. The protein is Cytochrome c oxidase subunit 8C, mitochondrial (Cox8c) of Rattus norvegicus (Rat).